The sequence spans 145 residues: D-aminoacyl-tRNA deacylase (145 aa).

The short motif at 137-138 (GP) is the Gly-cisPro motif, important for rejection of L-amino acids element.

It belongs to the DTD family. Homodimer.

It is found in the cytoplasm. It catalyses the reaction glycyl-tRNA(Ala) + H2O = tRNA(Ala) + glycine + H(+). It carries out the reaction a D-aminoacyl-tRNA + H2O = a tRNA + a D-alpha-amino acid + H(+). Functionally, an aminoacyl-tRNA editing enzyme that deacylates mischarged D-aminoacyl-tRNAs. Also deacylates mischarged glycyl-tRNA(Ala), protecting cells against glycine mischarging by AlaRS. Acts via tRNA-based rather than protein-based catalysis; rejects L-amino acids rather than detecting D-amino acids in the active site. By recycling D-aminoacyl-tRNA to D-amino acids and free tRNA molecules, this enzyme counteracts the toxicity associated with the formation of D-aminoacyl-tRNA entities in vivo and helps enforce protein L-homochirality. The polypeptide is D-aminoacyl-tRNA deacylase (Salmonella enteritidis PT4 (strain P125109)).